Reading from the N-terminus, the 422-residue chain is Transcription termination factor Rho 1 (422 aa).

Residues 49–124 enclose the Rho RNA-BD domain; it reads AAIGGGVVEI…VKAHSINFTD (76 aa). Residues 173-178, 185-190, and arginine 216 contribute to the ATP site; these read GKGQRA and RAGKTI.

It belongs to the Rho family. Homohexamer. The homohexamer assembles into an open ring structure.

Facilitates transcription termination by a mechanism that involves Rho binding to the nascent RNA, activation of Rho's RNA-dependent ATPase activity, and release of the mRNA from the DNA template. In Ehrlichia chaffeensis (strain ATCC CRL-10679 / Arkansas), this protein is Transcription termination factor Rho 1.